Reading from the N-terminus, the 476-residue chain is ATP synthase subunit beta (476 aa).

Residue 154–161 (GGAGVGKT) coordinates ATP.

Belongs to the ATPase alpha/beta chains family. In terms of assembly, F-type ATPases have 2 components, CF(1) - the catalytic core - and CF(0) - the membrane proton channel. CF(1) has five subunits: alpha(3), beta(3), gamma(1), delta(1), epsilon(1). CF(0) has four main subunits: a(1), b(1), b'(1) and c(9-12).

The protein resides in the cell inner membrane. The catalysed reaction is ATP + H2O + 4 H(+)(in) = ADP + phosphate + 5 H(+)(out). Functionally, produces ATP from ADP in the presence of a proton gradient across the membrane. The catalytic sites are hosted primarily by the beta subunits. This is ATP synthase subunit beta from Rhodopseudomonas palustris (strain BisB5).